Consider the following 333-residue polypeptide: Polygalacturonase inhibitor (333 aa).

Residues 1–27 (METSKLFLLSSSLLLVLLATRPCPSLS) form the signal peptide. 2 cysteine pairs are disulfide-bonded: cysteine 30–cysteine 60 and cysteine 61–cysteine 68. 10 LRR repeats span residues 72 to 96 (THRI…VGDL), 97 to 120 (PFLE…AIAK), 121 to 144 (LKHL…FFSE), 145 to 169 (LKNL…LSLL), 170 to 192 (PNLG…SFGK), 194 to 220 (AGST…GFDP), 221 to 240 (NVMD…FFNA), 241 to 263 (NKST…RVEF), 264 to 288 (PKSL…MTSL), and 290 to 312 (LQFL…KLQS). Asparagine 109, asparagine 133, asparagine 147, and asparagine 157 each carry an N-linked (GlcNAc...) asparagine glycan. Residue asparagine 241 is glycosylated (N-linked (GlcNAc...) asparagine). Asparagine 294 is a glycosylation site (N-linked (GlcNAc...) asparagine). Cystine bridges form between cysteine 301/cysteine 323 and cysteine 325/cysteine 332.

This sequence belongs to the polygalacturonase-inhibiting protein family.

The protein resides in the secreted. The protein localises to the cell wall. It is found in the membrane. Its function is as follows. Inhibitor of fungal polygalacturonase. It is an important factor for plant resistance to phytopathogenic fungi. In Vitis vinifera (Grape), this protein is Polygalacturonase inhibitor (pgip).